Reading from the N-terminus, the 87-residue chain is Putative regulatory protein GWCH70_1057 (87 aa).

The protein belongs to the RemA family.

The protein is Putative regulatory protein GWCH70_1057 of Geobacillus sp. (strain WCH70).